Reading from the N-terminus, the 91-residue chain is MVKKNSFISVITQEEKEENSGSVEFQVFHFTSKIRRLTSHLELHKRDFLSQKGLRIILGKRQRLLTYLSKKNKVRYKKLTDQLNIREPKIS.

Belongs to the universal ribosomal protein uS15 family. As to quaternary structure, part of the 30S ribosomal subunit.

The protein resides in the plastid. The protein localises to the chloroplast. This chain is Small ribosomal subunit protein uS15c (rps15), found in Phalaenopsis aphrodite subsp. formosana (Moth orchid).